The following is a 338-amino-acid chain: NADPH dehydrogenase (338 aa).

An FMN-binding site is contributed by serine 22–cysteine 25. Residue tyrosine 27 participates in substrate binding. FMN is bound by residues alanine 59 and glutamine 101. Residue histidine 163 to histidine 166 participates in substrate binding. Residues arginine 214 and glycine 306 to arginine 307 contribute to the FMN site.

This sequence belongs to the NADH:flavin oxidoreductase/NADH oxidase family. NamA subfamily. In terms of assembly, homotetramer. It depends on FMN as a cofactor.

It carries out the reaction A + NADPH + H(+) = AH2 + NADP(+). Catalyzes the reduction of the double bond of an array of alpha,beta-unsaturated aldehydes and ketones. It also reduces the nitro group of nitroester and nitroaromatic compounds. It could have a role in detoxification processes. This chain is NADPH dehydrogenase, found in Listeria monocytogenes serotype 4b (strain CLIP80459).